The sequence spans 270 residues: MFNFITFILFAVVCISYCHKSRGRRHFGDEYRINTPACDIVCEGQWKSEFHANFHKIYDTEYFEIPLDTAIVKNRANLKMFCSSTIQKYSCLRNECKIQRTPWSAEKHICVGHFDNFDRNINCLSLTDKYVQRECSNVCNSIKIEISQAEIDRMAEMDFSRQEKSEFVEQNKHCNVIACYQLCHEYIISKVCIDSAVAARSVVKSYYDSYLEREYTELNKDDQDELYSSFCRRVTPGQDENEFTANMTRYNNLTLDRMKNDIRSVFSILD.

The N-terminal stretch at M1 to G23 is a signal peptide. N246 and N252 each carry an N-linked (GlcNAc...) asparagine glycan.

It localises to the secreted. This is an uncharacterized protein from Caenorhabditis elegans.